A 93-amino-acid chain; its full sequence is Large ribosomal subunit protein mL41 (93 aa).

Residues 1–13 constitute a mitochondrion transit peptide; sequence MHQSLLCFGARRL.

The protein belongs to the mitochondrion-specific ribosomal protein mL41 family. Component of the mitochondrial large ribosomal subunit (mt-LSU). Mature yeast 74S mitochondrial ribosomes consist of a small (37S) and a large (54S) subunit. The 37S small subunit contains a 15S ribosomal RNA (15S mt-rRNA) and at least 32 different proteins. The 54S large subunit contains a 21S rRNA (21S mt-rRNA) and at least 45 different proteins.

It is found in the mitochondrion. In terms of biological role, component of the mitochondrial ribosome (mitoribosome), a dedicated translation machinery responsible for the synthesis of mitochondrial genome-encoded proteins, including at least some of the essential transmembrane subunits of the mitochondrial respiratory chain. The mitoribosomes are attached to the mitochondrial inner membrane and translation products are cotranslationally integrated into the membrane. In Schizosaccharomyces pombe (strain 972 / ATCC 24843) (Fission yeast), this protein is Large ribosomal subunit protein mL41 (mrpl27).